Consider the following 371-residue polypeptide: Uroporphyrinogen decarboxylase (371 aa).

Over residues 1–14 (MARWATMSTETTGT) the composition is skewed to polar residues. The disordered stretch occupies residues 1–30 (MARWATMSTETTGTGARDEGPRPGDPADSP). Residues 49–53 (RQAGR), D98, Y173, S228, and H342 contribute to the substrate site.

Belongs to the uroporphyrinogen decarboxylase family. As to quaternary structure, homodimer.

The protein localises to the cytoplasm. The enzyme catalyses uroporphyrinogen III + 4 H(+) = coproporphyrinogen III + 4 CO2. The protein operates within porphyrin-containing compound metabolism; protoporphyrin-IX biosynthesis; coproporphyrinogen-III from 5-aminolevulinate: step 4/4. In terms of biological role, catalyzes the decarboxylation of four acetate groups of uroporphyrinogen-III to yield coproporphyrinogen-III. The sequence is that of Uroporphyrinogen decarboxylase from Salinispora tropica (strain ATCC BAA-916 / DSM 44818 / JCM 13857 / NBRC 105044 / CNB-440).